We begin with the raw amino-acid sequence, 1074 residues long: Pleckstrin homology domain-containing family M member 1 (1074 aa).

In terms of domain architecture, RUN spans 40-182 (TSEDGDANTM…LSFELSYKSA (143 aa)). 3 disordered regions span residues 214–244 (QRKESLDSISHSSGSEDIEVQHSGHKIRRNR), 272–336 (LQEN…MFQT), and 382–454 (DEKQ…PPQE). Ser-218 carries the phosphoserine modification. Composition is skewed to polar residues over residues 313-329 (SKAQVNSAPSSGPNQEP) and 393-404 (PAQSTSDQQPSS). Phosphoserine is present on residues Ser-433, Ser-436, and Ser-491. The segment at 506 to 526 (GNAQPAPAPAPAPAPAPAPAP) is disordered. Pro residues predominate over residues 511 to 525 (APAPAPAPAPAPAPA). A PH 1 domain is found at 551 to 642 (GLMKLGTVAR…WLDRVREALQ (92 aa)). The short motif at 649 to 655 (EDEWVNI) is the LIR element. The interval 661 to 680 (AEDAPEAPPDSLPPYSTLLP) is disordered. The tract at residues 672 to 1074 (LPPYSTLLPE…RKYQEQNVVS (403 aa)) is interaction with RAB7A. One can recognise a PH 2 domain in the interval 701–795 (DAIKESLLYL…WRDLVRKVLA (95 aa)). The Phorbol-ester/DAG-type zinc-finger motif lies at 1004–1058 (QHVYHCDLCTQRGFICQICHHQDIIFPFEFDTTVRCAECRTVFHQSCQAVVRKGC).

Interacts (via N- and C-terminus) with RAB7A (GTP-bound form). Simultaneously interacts with RAB7A and ARL8B; bringing about clustering and fusion of late endosomes and lysosomes. Interacts (via RUN domain) with ARL8B (GTP-bound form); the interaction is required for PLEKHM1 localization to lysosomes and for ARL8B function in delivery and degradation of endocytic and autophagic cargo in lysosomes. PLEKHM1 and PLEKHM2 compete for interaction with ARL8B. Interacts with ARL8A; the interaction is weaker than with ARL8B. Interacts with VPS41, VPS11, VPS18, VPS33A and VPS39; indicative for an association with the HOPS complex; the interactions with, at least, VPS41, VPS11, VPS18 and VPS33A require ARL8B. Interacts with GABARAP, GABARAPL, GABARAPL2, MAP1LC3A, MAP1LC3B and MAP1LC3C. Interacts with PAFAH1B. Interacts (via N- and C-terminus) with NDEL1. Interacts (via C-terminus) with MAP3K7. Interacts (via N- and C-terminus) with FAM98A. Interacts (via C-terminus) with DEF8; this interaction is weak but increased in a RAB7A-dependent manner. May interact with sialyl-lex-positive protein.

The protein resides in the autolysosome membrane. It is found in the endosome membrane. Its subcellular location is the late endosome membrane. The protein localises to the lysosome membrane. Functionally, acts as a multivalent adapter protein that regulates Rab7-dependent and HOPS complex-dependent fusion events in the endolysosomal system and couples autophagic and the endocytic trafficking pathways. Acts as a dual effector of RAB7A and ARL8B that simultaneously binds these GTPases, bringing about clustering and fusion of late endosomes and lysosomes. Required for late stages of endolysosomal maturation, facilitating both endocytosis-mediated degradation of growth factor receptors and autophagosome clearance. Interaction with Arl8b is a crucial factor in the terminal maturation of autophagosomes and to mediate autophagosome-lysosome fusion. Positively regulates lysosome peripheral distribution and ruffled border formation in osteoclasts. May be involved in negative regulation of endocytic transport from early endosome to late endosome/lysosome implicating its association with Rab7. May have a role in sialyl-lex-mediated transduction of apoptotic signals. Involved in bone resorption. This Mus musculus (Mouse) protein is Pleckstrin homology domain-containing family M member 1.